The primary structure comprises 262 residues: uncharacterized protein (262 aa).

Helical transmembrane passes span 4 to 24, 28 to 48, and 62 to 82; these read LIVF…RFLG, VSRF…CLFR, and CYLA…SHIL. A coiled-coil region spans residues 152–181; sequence EREARAQEHDRISAEVETITSACENLEAAM.

It localises to the mitochondrion membrane. This is an uncharacterized protein from Arabidopsis thaliana (Mouse-ear cress).